The chain runs to 418 residues: MTPQSSPSSSRDHVCLVCQDFASGYHYGVPSCVGCKTFFRRTIMKKQKYICQFEGNCPVDKTIRCACRYCRFEKCLSVGMDRNALQQNRDPIGYTKRTRRPKKELKTTSDCSSDEGASTPPSVSPLQLSPPPISPLLFQAAPLKPRRCILQTLAEREKCANDLRLSEYLPIRSLHEALCSKALLNDTAFLEKWGQPSERHQIFDLRFVNHDDYHYWHERDWFLLTEYAKTFDVFEALDYQDKAELVRHAAITVPVLVQVWNSPDYGPDTIVFPDGAYFDRTPEPTRPAGLNRKKYQMLDLVLKPFRDLQLDATEFAAFKAVTFLNPDADISLPARKLVNNERVRITKQLYGYMAMKDDVDTAIERFARLVLMGTSMSKMACESKEAVWIADFFENIGFSAFARQLFFGDTTSVVAHKL.

A DNA-binding region (nuclear receptor) is located at residues 12–87 (DHVCLVCQDF…VGMDRNALQQ (76 aa)). 2 NR C4-type zinc fingers span residues 15–35 (CLVC…CVGC) and 51–70 (CQFE…CRYC). The interval 89–130 (RDPIGYTKRTRRPKKELKTTSDCSSDEGASTPPSVSPLQLSP) is disordered. The NR LBD domain occupies 170–409 (PIRSLHEALC…AFARQLFFGD (240 aa)). The AF-2 stretch occupies residues 398 to 409 (FSAFARQLFFGD).

Belongs to the nuclear hormone receptor family. As to expression, expressed in germ and intestinal cells and at low levels in the hypodermis.

Its subcellular location is the nucleus. Its function is as follows. Probable transcription factor which may have a role in detoxifying dietary metabolites arising from bacterial tryptophan metabolism. Required for fertility and involved in proper postembryonic germline development, especially germline stem cell (GSC) proliferation. Required for activation of the methionine/S-adenosylmethionine (Met/SAM) cycle in response to low levels of SAM. The chain is Nuclear hormone receptor 114 from Caenorhabditis elegans.